The following is a 357-amino-acid chain: Chorismate synthase (357 aa).

Residue Arg47 participates in NADP(+) binding. Residues 123–125 (RSS), Gly281, 296–300 (KPTSS), and Arg324 contribute to the FMN site.

The protein belongs to the chorismate synthase family. Homotetramer. FMNH2 is required as a cofactor.

It carries out the reaction 5-O-(1-carboxyvinyl)-3-phosphoshikimate = chorismate + phosphate. It participates in metabolic intermediate biosynthesis; chorismate biosynthesis; chorismate from D-erythrose 4-phosphate and phosphoenolpyruvate: step 7/7. In terms of biological role, catalyzes the anti-1,4-elimination of the C-3 phosphate and the C-6 proR hydrogen from 5-enolpyruvylshikimate-3-phosphate (EPSP) to yield chorismate, which is the branch point compound that serves as the starting substrate for the three terminal pathways of aromatic amino acid biosynthesis. This reaction introduces a second double bond into the aromatic ring system. This is Chorismate synthase from Chlamydia muridarum (strain MoPn / Nigg).